Reading from the N-terminus, the 320-residue chain is G-protein coupled receptor homolog FPV021 (320 aa).

Residues 1–18 (MDTDYGTVHTQQSVKGNT) lie on the Extracellular side of the membrane. Residues 19 to 39 (LILLIYFISFIVGFPGNCTVI) traverse the membrane as a helical segment. Residues 40 to 52 (WFTGYRWKKSVTT) lie on the Cytoplasmic side of the membrane. Residues 53–73 (IWFLNLAIADTLFVIFIPFEI) traverse the membrane as a helical segment. The Extracellular portion of the chain corresponds to 74–91 (TYILMGHYWPFGLFVCRI). A disulfide bond links C89 and C167. The helical transmembrane segment at 92–112 (GSLMFNTGMYASIFFLTFISI) threads the bilayer. Residues 113 to 133 (DRYCLAFRRDICNKYRYRINI) are Cytoplasmic-facing. The chain crosses the membrane as a helical span at residues 134–154 (MVMIIISWIISILLSTPYMYF). Residues 155 to 188 (KNTNEKYRNNRDCLEDYHSDNNTYLLRRVVFCIS) lie on the Extracellular side of the membrane. An N-linked (GlcNAc...) asparagine; by host glycan is attached at N175. The chain crosses the membrane as a helical span at residues 189-209 (LVMRYLVPSVVMLFCYCLLLF). Topologically, residues 210-222 (KHSLFLSKGQTYT) are cytoplasmic. A helical membrane pass occupies residues 223 to 243 (IVIMITSFMVLWTPYNILYFI). Residues 244–260 (DVIGSHYYNADTIIDAA) lie on the Extracellular side of the membrane. A helical membrane pass occupies residues 261–281 (PISISLIFLSSSINPMIYMLV). Residues 282–320 (GRYVSFENYSMRESLKLILSEERDNQTNHENEIKMENIN) lie on the Cytoplasmic side of the membrane.

The protein belongs to the G-protein coupled receptor 1 family.

It is found in the host cell membrane. The polypeptide is G-protein coupled receptor homolog FPV021 (Vertebrata (FPV)).